The sequence spans 57 residues: Major exported protein (57 aa).

The protein belongs to the hcp1 family. In terms of assembly, homodimer.

The protein resides in the secreted. The polypeptide is Major exported protein (Pseudomonas syringae pv. ribicola).